Reading from the N-terminus, the 432-residue chain is Enolase (432 aa).

Position 167 (glutamine 167) interacts with (2R)-2-phosphoglycerate. The Proton donor role is filled by glutamate 209. Residues aspartate 246, glutamate 290, and aspartate 317 each contribute to the Mg(2+) site. (2R)-2-phosphoglycerate is bound by residues lysine 342, arginine 371, serine 372, and lysine 393. Lysine 342 (proton acceptor) is an active-site residue.

The protein belongs to the enolase family. In terms of assembly, component of the RNA degradosome, a multiprotein complex involved in RNA processing and mRNA degradation. Mg(2+) is required as a cofactor.

It is found in the cytoplasm. The protein resides in the secreted. It localises to the cell surface. It carries out the reaction (2R)-2-phosphoglycerate = phosphoenolpyruvate + H2O. It participates in carbohydrate degradation; glycolysis; pyruvate from D-glyceraldehyde 3-phosphate: step 4/5. In terms of biological role, catalyzes the reversible conversion of 2-phosphoglycerate (2-PG) into phosphoenolpyruvate (PEP). It is essential for the degradation of carbohydrates via glycolysis. The protein is Enolase of Cronobacter sakazakii (strain ATCC BAA-894) (Enterobacter sakazakii).